The chain runs to 476 residues: CBL-interacting protein kinase 30 (476 aa).

The Protein kinase domain occupies Tyr-17–Phe-272. ATP is bound by residues Leu-23–Val-31 and Lys-46. Asp-140 serves as the catalytic Proton acceptor. The segment at Asp-158 to Glu-187 is activation loop. Residues Lys-296 to Lys-315 are disordered. Residues Ser-299–Asp-353 enclose the NAF domain. The interval Arg-358–Phe-387 is PPI.

This sequence belongs to the protein kinase superfamily. CAMK Ser/Thr protein kinase family. SNF1 subfamily. It depends on Mn(2+) as a cofactor.

The catalysed reaction is L-seryl-[protein] + ATP = O-phospho-L-seryl-[protein] + ADP + H(+). It carries out the reaction L-threonyl-[protein] + ATP = O-phospho-L-threonyl-[protein] + ADP + H(+). CIPK serine-threonine protein kinases interact with CBL proteins. Binding of a CBL protein to the regulatory NAF domain of CIPK protein lead to the activation of the kinase in a calcium-dependent manner. This Oryza sativa subsp. japonica (Rice) protein is CBL-interacting protein kinase 30 (CIPK30).